The chain runs to 116 residues: DSTDGLLVKDKYLCGDLYGEEYGVIFPYLGLKTECLWTIKMDPLYRILLTVRDVHENCNKESLEIIEGPPESSNSRKICDTSHAEYTSCTNTMTVKYTRKPNHPAPDFFLIFRRVL.

Disulfide bonds link C14-C35 and C58-C79. The region spanning C14–V115 is the CUB domain.

This sequence belongs to the spermadhesin family. As to quaternary structure, homodimer; disulfide-linked. In terms of tissue distribution, seminal plasma.

It localises to the secreted. In terms of biological role, may be involved in the fertilization process. This Bos taurus (Bovine) protein is Spermadhesin Z13.